Consider the following 243-residue polypeptide: Phosphoribosylaminoimidazole-succinocarboxamide synthase (243 aa).

Belongs to the SAICAR synthetase family.

The catalysed reaction is 5-amino-1-(5-phospho-D-ribosyl)imidazole-4-carboxylate + L-aspartate + ATP = (2S)-2-[5-amino-1-(5-phospho-beta-D-ribosyl)imidazole-4-carboxamido]succinate + ADP + phosphate + 2 H(+). Its pathway is purine metabolism; IMP biosynthesis via de novo pathway; 5-amino-1-(5-phospho-D-ribosyl)imidazole-4-carboxamide from 5-amino-1-(5-phospho-D-ribosyl)imidazole-4-carboxylate: step 1/2. This is Phosphoribosylaminoimidazole-succinocarboxamide synthase from Thermosynechococcus vestitus (strain NIES-2133 / IAM M-273 / BP-1).